A 215-amino-acid chain; its full sequence is UPF0502 protein YceH (215 aa).

It belongs to the UPF0502 family.

This is UPF0502 protein YceH from Salmonella schwarzengrund (strain CVM19633).